Consider the following 702-residue polypeptide: MNSLFASTARGLEELLKTELENLGAVECQVVQGGVHFKGDTRLVYQSLMWSRLASRIMLPLGECKVYSDLDLYLGVQAINWTEMFNPGATFAVHFSGLNDTIRNSQYGAMKVKDAIVDAFTRKNLPRPNVDRDAPDIRVNVWLHKETASIALDLSGDGLHLRGYRDRAGIAPIKETLAAAIVMRSGWQSGTPLLDPMCGSGTLLIEAAMLATDRAPGLHRGRWGFSGWAQHDEAIWQEVKAEAQTRARKGLAEYSSHFYGSDSDARVIQRARTNARLAGIGELITFEVKDVAQLTNPLPKGPYGTVLSNPPYGERLDSEPALIALHSLLGRIMKNQFGGWNLSLFSASPDLLSCLQLRADKQYKAKNGPLDCVQKNYHVAESTPDSKPAMVAEDYANRLRKNLKKFEKWARQEGIECYRLYDADLPEYNVAVDRYADWVVVQEYAPPKTIDAHKARQRLFDIIAATISVLGIAPNKLVLKTRERHKGKNQYQKLGEKGEFLEVTEYNAHLWVNLTDYLDTGLFLDHRIARRMLGQMSKGKDFLNLFSYTGSATVHAGLGGARSTTTVDMSRTYLEWAERNLRLNGLTRRAHRLIQADCLAWLREANEQFDLIFIDPPTFSNSKRMEDAFDVQRDHLALMKDLKRLLRAGGTIMFSNNKRGFRMDLDGLAKLGLKAQEITQKTLSQDFARNRQIHNCWLITAA.

Residues 43-154 form the THUMP domain; the sequence is LVYQSLMWSR…KETASIALDL (112 aa).

Belongs to the methyltransferase superfamily. RlmKL family.

It localises to the cytoplasm. It carries out the reaction guanosine(2445) in 23S rRNA + S-adenosyl-L-methionine = N(2)-methylguanosine(2445) in 23S rRNA + S-adenosyl-L-homocysteine + H(+). It catalyses the reaction guanosine(2069) in 23S rRNA + S-adenosyl-L-methionine = N(2)-methylguanosine(2069) in 23S rRNA + S-adenosyl-L-homocysteine + H(+). Specifically methylates the guanine in position 2445 (m2G2445) and the guanine in position 2069 (m7G2069) of 23S rRNA. The polypeptide is Ribosomal RNA large subunit methyltransferase K/L (Shigella flexneri serotype 5b (strain 8401)).